Consider the following 111-residue polypeptide: MNSKTPSTDIAALKDLLRYKVTVARHGFLFDDGKIVWSEDGDEAWNRLLVVVGALRSSNRMSQALFMDMSITKGDGYLLFSDLQGTNNLQYRTPKFRQYLFPVDEFLPLPR.

Belongs to the novirhabdovirus NV protein family.

In terms of biological role, plays an essential role for the viral pathogenicity. The chain is Non-virion protein (NV) from Acanthopagrus schlegelii (Black porgy).